A 329-amino-acid polypeptide reads, in one-letter code: Glycerol-3-phosphate dehydrogenase [NAD(P)+] (329 aa).

Residues serine 13, tryptophan 14, histidine 34, and lysine 105 each contribute to the NADPH site. 3 residues coordinate sn-glycerol 3-phosphate: lysine 105, glycine 134, and serine 136. Alanine 138 serves as a coordination point for NADPH. Sn-glycerol 3-phosphate-binding residues include lysine 189, aspartate 242, serine 252, arginine 253, and asparagine 254. The Proton acceptor role is filled by lysine 189. NADPH is bound at residue arginine 253. 2 residues coordinate NADPH: valine 277 and glutamate 279.

Belongs to the NAD-dependent glycerol-3-phosphate dehydrogenase family.

The protein localises to the cytoplasm. The catalysed reaction is sn-glycerol 3-phosphate + NAD(+) = dihydroxyacetone phosphate + NADH + H(+). The enzyme catalyses sn-glycerol 3-phosphate + NADP(+) = dihydroxyacetone phosphate + NADPH + H(+). The protein operates within membrane lipid metabolism; glycerophospholipid metabolism. Functionally, catalyzes the reduction of the glycolytic intermediate dihydroxyacetone phosphate (DHAP) to sn-glycerol 3-phosphate (G3P), the key precursor for phospholipid synthesis. This chain is Glycerol-3-phosphate dehydrogenase [NAD(P)+], found in Legionella pneumophila (strain Lens).